Here is a 304-residue protein sequence, read N- to C-terminus: Quinolinate synthase (304 aa).

H23 and S40 together coordinate iminosuccinate. C85 contributes to the [4Fe-4S] cluster binding site. Iminosuccinate-binding positions include 111-113 (YVN) and S128. C171 provides a ligand contact to [4Fe-4S] cluster. Iminosuccinate-binding positions include 197–199 (HPE) and T214. [4Fe-4S] cluster is bound at residue C259.

The protein belongs to the quinolinate synthase family. Type 2 subfamily. Requires [4Fe-4S] cluster as cofactor.

The protein resides in the cytoplasm. The catalysed reaction is iminosuccinate + dihydroxyacetone phosphate = quinolinate + phosphate + 2 H2O + H(+). The protein operates within cofactor biosynthesis; NAD(+) biosynthesis; quinolinate from iminoaspartate: step 1/1. Functionally, catalyzes the condensation of iminoaspartate with dihydroxyacetone phosphate to form quinolinate. The polypeptide is Quinolinate synthase (Pelobacter propionicus (strain DSM 2379 / NBRC 103807 / OttBd1)).